A 389-amino-acid polypeptide reads, in one-letter code: Large envelope protein (389 aa).

At Met1 the chain carries N-acetylmethionine. Gly2 is lipidated: N-myristoyl glycine; by host. Positions Gly2–Ala108 are pre-S1. The interval Gly2–Asn163 is pre-S. The Virion surface; in external conformation segment spans residues Gly2–Gly170. Residues Gly2–Arg242 are Intravirion; in internal conformation-facing. Residues Thr79 to Asp103 are disordered. The segment covering Ala84 to Thr95 has biased composition (polar residues). The interval Met109–Asn163 is pre-S2. A helical membrane pass occupies residues Phe171 to Ile191. The Intravirion; in external conformation portion of the chain corresponds to Pro192 to Arg242. The chain crosses the membrane as a helical span at residues Phe243 to Tyr263. Residues Gln264 to Ser337 are Virion surface-facing. Asn309 carries an N-linked (GlcNAc...) asparagine; by host glycan. A helical transmembrane segment spans residues Leu338–Ile358. Residues Trp359–Trp364 are Intravirion-facing. The chain crosses the membrane as a helical span at residues Gly365–Val387. The Virion surface segment spans residues Tyr388–Ile389.

This sequence belongs to the orthohepadnavirus major surface antigen family. In its internal form (Li-HBsAg), interacts with the capsid protein and with the isoform S. Interacts with host chaperone CANX. In terms of assembly, associates with host chaperone CANX through its pre-S2 N glycan; this association may be essential for isoform M proper secretion. As to quaternary structure, interacts with isoform L. Interacts with the antigens of satellite virus HDV (HDVAgs); this interaction is required for encapsidation of HDV genomic RNA. In terms of processing, isoform M is N-terminally acetylated by host at a ratio of 90%, and N-glycosylated by host at the pre-S2 region. Myristoylated.

Its subcellular location is the virion membrane. Its function is as follows. The large envelope protein exists in two topological conformations, one which is termed 'external' or Le-HBsAg and the other 'internal' or Li-HBsAg. In its external conformation the protein attaches the virus to cell receptors and thereby initiating infection. This interaction determines the species specificity and liver tropism. This attachment induces virion internalization predominantly through caveolin-mediated endocytosis. The large envelope protein also assures fusion between virion membrane and endosomal membrane. In its internal conformation the protein plays a role in virion morphogenesis and mediates the contact with the nucleocapsid like a matrix protein. The middle envelope protein plays an important role in the budding of the virion. It is involved in the induction of budding in a nucleocapsid independent way. In this process the majority of envelope proteins bud to form subviral lipoprotein particles of 22 nm of diameter that do not contain a nucleocapsid. In Hepatitis B virus genotype A1 subtype adw2 (isolate South Africa/84/2001) (HBV-A), this protein is Large envelope protein.